The primary structure comprises 1274 residues: Polycomb protein Sfmbt (1274 aa).

The tract at residues 266-285 (PSSKQMKGYRNSNSSGTSSA) is disordered. Positions 267–278 (SSKQMKGYRNSN) are enriched in polar residues. The segment at 331-366 (PIQKDGMAVCERCGAIGVKHTFYTKSRRFCSMACAR) adopts an FCS-type zinc-finger fold. Zn(2+) contacts are provided by cysteine 340, cysteine 343, cysteine 360, and cysteine 364. Over residues 381-394 (TGATTSNNQSTSSS) the composition is skewed to low complexity. Disordered regions lie at residues 381 to 401 (TGAT…AASG) and 488 to 510 (PGGE…SGYL). The segment covering 494-509 (GSGNDTSTPNTASSGY) has biased composition (polar residues). 4 MBT repeats span residues 564–675 (YDWL…LIPP), 683–781 (KDWK…LAAP), 789–899 (LAGR…VTPP), and 907–1003 (FTWE…LEGP). Disordered stretches follow at residues 1007–1063 (SYQQ…TTPH) and 1083–1167 (YENN…NSSA). A compositionally biased stretch (basic residues) spans 1019–1028 (KVPRKKKTKK). Positions 1038–1050 (AKQQNDNTQTTQT) are enriched in low complexity. A compositionally biased stretch (acidic residues) spans 1087–1114 (QPEDGDGDEEDPDPDADADLDADADGDG). Composition is skewed to polar residues over residues 1117 to 1128 (STSHISEQSTTH) and 1158 to 1167 (GNSNKMNSSA). One can recognise an SAM domain in the interval 1194 to 1258 (WNVYDVSQFL…DLITQLKCKV (65 aa)).

As to quaternary structure, interacts with pho as a component of the pho-repressive complex (PhoRC).

The protein localises to the nucleus. Functionally, polycomb group (PcG) protein that binds to the Polycomb response elements (PREs) found in the regulatory regions of many genes. PcG proteins act by forming multiprotein complexes, which are required to maintain the transcriptionally repressive state of homeotic genes throughout development. PcG proteins are not required to initiate repression, but to maintain it during later stages of development. They probably act via the methylation of histones, rendering chromatin heritably changed in its expressibility. Necessary but not sufficient to recruit a functional PcG repressive complex that represses target genes, suggesting that the recruitment of the distinct PRC1 complex is also required to allow a subsequent repression. The chain is Polycomb protein Sfmbt from Drosophila pseudoobscura pseudoobscura (Fruit fly).